The sequence spans 310 residues: Beta-ketoacyl-[acyl-carrier-protein] synthase III (310 aa).

Active-site residues include C112 and H235. The ACP-binding stretch occupies residues 236–240; sequence QANIR. N265 is a catalytic residue.

It belongs to the thiolase-like superfamily. FabH family. Homodimer.

It is found in the cytoplasm. It catalyses the reaction malonyl-[ACP] + acetyl-CoA + H(+) = 3-oxobutanoyl-[ACP] + CO2 + CoA. It functions in the pathway lipid metabolism; fatty acid biosynthesis. Its function is as follows. Catalyzes the condensation reaction of fatty acid synthesis by the addition to an acyl acceptor of two carbons from malonyl-ACP. Catalyzes the first condensation reaction which initiates fatty acid synthesis and may therefore play a role in governing the total rate of fatty acid production. Possesses both acetoacetyl-ACP synthase and acetyl transacylase activities. Its substrate specificity determines the biosynthesis of branched-chain and/or straight-chain of fatty acids. In Geobacillus kaustophilus (strain HTA426), this protein is Beta-ketoacyl-[acyl-carrier-protein] synthase III.